We begin with the raw amino-acid sequence, 272 residues long: Regulatory protein RecX (272 aa).

It belongs to the RecX family.

It is found in the cytoplasm. In terms of biological role, modulates RecA activity. The sequence is that of Regulatory protein RecX from Staphylococcus aureus (strain Newman).